A 247-amino-acid chain; its full sequence is ATP synthase subunit a 1 (247 aa).

The next 6 membrane-spanning stretches (helical) occupy residues 32 to 52 (YMLLAVVLIAGMMLAAGRALV), 82 to 102 (FFPLVFSLFMFIFVSNIVGII), 112 to 132 (IIVTFSLALLVFLTVIIYGFY), 141 to 161 (LFVPSGIPAVILPLVVVIEII), 181 to 201 (GHVTLKVFASFVTMLGALGFV), and 206 to 226 (ALLPLGLTVALTGLELMVAFL).

It belongs to the ATPase A chain family. As to quaternary structure, F-type ATPases have 2 components, CF(1) - the catalytic core - and CF(0) - the membrane proton channel. CF(1) has five subunits: alpha(3), beta(3), gamma(1), delta(1), epsilon(1). CF(0) has four main subunits: a, b, b' and c.

The protein resides in the cell inner membrane. Functionally, key component of the proton channel; it plays a direct role in the translocation of protons across the membrane. In Bradyrhizobium sp. (strain BTAi1 / ATCC BAA-1182), this protein is ATP synthase subunit a 1.